The chain runs to 342 residues: Phosphate acyltransferase (342 aa).

The protein belongs to the PlsX family. Homodimer. Probably interacts with PlsY.

The protein resides in the cytoplasm. It catalyses the reaction a fatty acyl-[ACP] + phosphate = an acyl phosphate + holo-[ACP]. It functions in the pathway lipid metabolism; phospholipid metabolism. Its function is as follows. Catalyzes the reversible formation of acyl-phosphate (acyl-PO(4)) from acyl-[acyl-carrier-protein] (acyl-ACP). This enzyme utilizes acyl-ACP as fatty acyl donor, but not acyl-CoA. This is Phosphate acyltransferase from Shewanella putrefaciens (strain CN-32 / ATCC BAA-453).